The sequence spans 264 residues: Glycosylphosphatidylinositol anchor biosynthesis protein 11 (264 aa).

The interval 1–45 (MPLVDPVTMSTPSTPAKAMGKSLPNTVKDPSPPPKAGSHTRSPVE) is disordered. Helical transmembrane passes span 49 to 69 (NSYY…VLLW), 83 to 103 (LILP…LPVA), 132 to 152 (LLSL…MVLF), 160 to 180 (APHT…PLFY), 202 to 222 (SVGG…PIPL), and 233 to 253 (VTVL…GRTL).

It belongs to the PIGF family.

The protein localises to the endoplasmic reticulum membrane. It functions in the pathway glycolipid biosynthesis; glycosylphosphatidylinositol-anchor biosynthesis. Functionally, acts in the GPI biosynthetic pathway between GlcNAc-PI synthesis and GPI transfer to protein. The chain is Glycosylphosphatidylinositol anchor biosynthesis protein 11 (GPI11) from Pyricularia oryzae (strain 70-15 / ATCC MYA-4617 / FGSC 8958) (Rice blast fungus).